A 117-amino-acid polypeptide reads, in one-letter code: Minor capsid protein VP2 (117 aa).

This sequence belongs to the lagovirus VP2 protein family. Homooligomer. The portal-like structure consists in 12 copies of VP2. Interacts with capsid protein VP1.

The protein resides in the virion. The protein localises to the host cytoplasm. Functionally, minor structural protein that forms a portal-like structure at a unique three-fold axis of symmetry, following binding to the host receptor. The channel formed by VP2 may allow the delivery of the viral genome through the host endosomal membrane. This Oryctolagus cuniculus (Rabbit) protein is Minor capsid protein VP2.